The following is a 195-amino-acid chain: 7-methyl-GTP pyrophosphatase (195 aa).

D70 (proton acceptor) is an active-site residue.

The protein belongs to the Maf family. YceF subfamily. It depends on a divalent metal cation as a cofactor.

Its subcellular location is the cytoplasm. It catalyses the reaction N(7)-methyl-GTP + H2O = N(7)-methyl-GMP + diphosphate + H(+). Functionally, nucleoside triphosphate pyrophosphatase that hydrolyzes 7-methyl-GTP (m(7)GTP). May have a dual role in cell division arrest and in preventing the incorporation of modified nucleotides into cellular nucleic acids. The chain is 7-methyl-GTP pyrophosphatase from Shewanella sp. (strain MR-4).